Reading from the N-terminus, the 390-residue chain is uncharacterized protein (390 aa).

This sequence belongs to the arsA ATPase family.

This is an uncharacterized protein from Streptomyces coelicolor (strain ATCC BAA-471 / A3(2) / M145).